The following is a 412-amino-acid chain: Glucose-1-phosphate adenylyltransferase (412 aa).

Residues Tyr98, Gly163, 178–179 (EK), and Ser189 each bind alpha-D-glucose 1-phosphate.

It belongs to the bacterial/plant glucose-1-phosphate adenylyltransferase family. As to quaternary structure, homotetramer.

It carries out the reaction alpha-D-glucose 1-phosphate + ATP + H(+) = ADP-alpha-D-glucose + diphosphate. Its pathway is glycan biosynthesis; glycogen biosynthesis. In terms of biological role, involved in the biosynthesis of ADP-glucose, a building block required for the elongation reactions to produce glycogen. Catalyzes the reaction between ATP and alpha-D-glucose 1-phosphate (G1P) to produce pyrophosphate and ADP-Glc. The polypeptide is Glucose-1-phosphate adenylyltransferase (Thermosipho africanus (strain TCF52B)).